The following is a 290-amino-acid chain: Ribosomal RNA small subunit methyltransferase A (290 aa).

The S-adenosyl-L-methionine site is built by N27, L29, G54, E75, D100, and N125.

It belongs to the class I-like SAM-binding methyltransferase superfamily. rRNA adenine N(6)-methyltransferase family. RsmA subfamily.

The protein localises to the cytoplasm. It carries out the reaction adenosine(1518)/adenosine(1519) in 16S rRNA + 4 S-adenosyl-L-methionine = N(6)-dimethyladenosine(1518)/N(6)-dimethyladenosine(1519) in 16S rRNA + 4 S-adenosyl-L-homocysteine + 4 H(+). Specifically dimethylates two adjacent adenosines (A1518 and A1519) in the loop of a conserved hairpin near the 3'-end of 16S rRNA in the 30S particle. May play a critical role in biogenesis of 30S subunits. The sequence is that of Ribosomal RNA small subunit methyltransferase A from Streptococcus sanguinis (strain SK36).